A 248-amino-acid chain; its full sequence is Probable transcriptional regulatory protein RHOS4_22610 (248 aa).

The tract at residues 1 to 21 is disordered; that stretch reads MAGHSKWANIQHRKGKQDKLR.

This sequence belongs to the TACO1 family.

It is found in the cytoplasm. This Cereibacter sphaeroides (strain ATCC 17023 / DSM 158 / JCM 6121 / CCUG 31486 / LMG 2827 / NBRC 12203 / NCIMB 8253 / ATH 2.4.1.) (Rhodobacter sphaeroides) protein is Probable transcriptional regulatory protein RHOS4_22610.